Here is a 185-residue protein sequence, read N- to C-terminus: GTP cyclohydrolase 1 (185 aa).

Residues Cys76, His79, and Cys147 each contribute to the Zn(2+) site.

It belongs to the GTP cyclohydrolase I family. Toroid-shaped homodecamer, composed of two pentamers of five dimers.

The enzyme catalyses GTP + H2O = 7,8-dihydroneopterin 3'-triphosphate + formate + H(+). The protein operates within cofactor biosynthesis; 7,8-dihydroneopterin triphosphate biosynthesis; 7,8-dihydroneopterin triphosphate from GTP: step 1/1. The polypeptide is GTP cyclohydrolase 1 (Clostridium perfringens (strain ATCC 13124 / DSM 756 / JCM 1290 / NCIMB 6125 / NCTC 8237 / Type A)).